We begin with the raw amino-acid sequence, 238 residues long: Large ribosomal subunit protein uL1 (238 aa).

It belongs to the universal ribosomal protein uL1 family. As to quaternary structure, part of the 50S ribosomal subunit.

Its function is as follows. Binds directly to 23S rRNA. The L1 stalk is quite mobile in the ribosome, and is involved in E site tRNA release. In terms of biological role, protein L1 is also a translational repressor protein, it controls the translation of the L11 operon by binding to its mRNA. The chain is Large ribosomal subunit protein uL1 from Picosynechococcus sp. (strain ATCC 27264 / PCC 7002 / PR-6) (Agmenellum quadruplicatum).